A 458-amino-acid chain; its full sequence is ATP synthase subunit beta (458 aa).

ATP is bound at residue 148–155 (GGAGVGKT).

The protein belongs to the ATPase alpha/beta chains family. As to quaternary structure, F-type ATPases have 2 components, CF(1) - the catalytic core - and CF(0) - the membrane proton channel. CF(1) has five subunits: alpha(3), beta(3), gamma(1), delta(1), epsilon(1). CF(0) has three main subunits: a(1), b(2) and c(9-12). The alpha and beta chains form an alternating ring which encloses part of the gamma chain. CF(1) is attached to CF(0) by a central stalk formed by the gamma and epsilon chains, while a peripheral stalk is formed by the delta and b chains.

It localises to the cell inner membrane. The enzyme catalyses ATP + H2O + 4 H(+)(in) = ADP + phosphate + 5 H(+)(out). Functionally, produces ATP from ADP in the presence of a proton gradient across the membrane. The catalytic sites are hosted primarily by the beta subunits. The protein is ATP synthase subunit beta of Pseudomonas entomophila (strain L48).